The following is a 68-amino-acid chain: Large ribosomal subunit protein uL29 (68 aa).

Belongs to the universal ribosomal protein uL29 family.

The protein is Large ribosomal subunit protein uL29 of Streptococcus suis (strain 98HAH33).